The chain runs to 458 residues: Argininosuccinate lyase (458 aa).

The protein belongs to the lyase 1 family. Argininosuccinate lyase subfamily.

It localises to the cytoplasm. It catalyses the reaction 2-(N(omega)-L-arginino)succinate = fumarate + L-arginine. It functions in the pathway amino-acid biosynthesis; L-arginine biosynthesis; L-arginine from L-ornithine and carbamoyl phosphate: step 3/3. The polypeptide is Argininosuccinate lyase (Anoxybacillus flavithermus (strain DSM 21510 / WK1)).